The primary structure comprises 222 residues: Pro-opiomelanocortin-1 (222 aa).

The N-terminal stretch at 1–28 is a signal peptide; the sequence is MVRGERMLCPAWLLALAVLCAAGSEVRA. The propeptide occupies 29-105; sequence QCMEDARCRD…DPESSPQHEH (77 aa).

This sequence belongs to the POMC family. Post-translationally, specific enzymatic cleavages at paired basic residues yield the different active peptides.

It is found in the secreted. Its function is as follows. Stimulates the adrenal glands to release cortisol. Anorexigenic peptide. Increases the pigmentation of skin by increasing melanin production in melanocytes. In terms of biological role, increases the pigmentation of skin by increasing melanin production in melanocytes. Functionally, endogenous orexigenic opiate. Its function is as follows. Endogenous opiate. In Cyprinus carpio (Common carp), this protein is Pro-opiomelanocortin-1 (pomca).